A 622-amino-acid polypeptide reads, in one-letter code: 1-deoxy-D-xylulose-5-phosphate synthase (622 aa).

Thiamine diphosphate is bound by residues H74 and 115 to 117 (GHS). Residue D146 coordinates Mg(2+). Thiamine diphosphate contacts are provided by residues 147–148 (GA), N175, Y286, and E366. A Mg(2+)-binding site is contributed by N175.

Belongs to the transketolase family. DXPS subfamily. Homodimer. Mg(2+) is required as a cofactor. It depends on thiamine diphosphate as a cofactor.

It catalyses the reaction D-glyceraldehyde 3-phosphate + pyruvate + H(+) = 1-deoxy-D-xylulose 5-phosphate + CO2. Its pathway is metabolic intermediate biosynthesis; 1-deoxy-D-xylulose 5-phosphate biosynthesis; 1-deoxy-D-xylulose 5-phosphate from D-glyceraldehyde 3-phosphate and pyruvate: step 1/1. Functionally, catalyzes the acyloin condensation reaction between C atoms 2 and 3 of pyruvate and glyceraldehyde 3-phosphate to yield 1-deoxy-D-xylulose-5-phosphate (DXP). The polypeptide is 1-deoxy-D-xylulose-5-phosphate synthase (Carboxydothermus hydrogenoformans (strain ATCC BAA-161 / DSM 6008 / Z-2901)).